Here is a 137-residue protein sequence, read N- to C-terminus: Ribosomal RNA small subunit methyltransferase G (137 aa).

Residues G75, F80, and 126 to 127 (AE) contribute to the S-adenosyl-L-methionine site.

Belongs to the methyltransferase superfamily. RNA methyltransferase RsmG family.

The protein resides in the cytoplasm. Its function is as follows. Specifically methylates the N7 position of a guanine in 16S rRNA. The chain is Ribosomal RNA small subunit methyltransferase G from Mycoplasma mycoides subsp. mycoides SC (strain CCUG 32753 / NCTC 10114 / PG1).